Consider the following 113-residue polypeptide: Teretoxin Tan14.1 (113 aa).

An N-terminal signal peptide occupies residues methionine 1–valine 21. A propeptide spanning residues histidine 22–arginine 86 is cleaved from the precursor.

It belongs to the teretoxin N (TN) superfamily. In terms of processing, contains 2 disulfide bonds. As to expression, expressed by the venom duct.

It is found in the secreted. The sequence is that of Teretoxin Tan14.1 from Terebra anilis (Auger snail).